Here is a 305-residue protein sequence, read N- to C-terminus: Dihydroorotate dehydrogenase B (NAD(+)), catalytic subunit (305 aa).

FMN contacts are provided by residues Ser21 and 45–46; that span reads KG. Residues Lys45 and 69 to 73 each bind substrate; that span reads NAVGL. FMN is bound by residues Asn99 and Asn127. Substrate is bound at residue Asn127. The active-site Nucleophile is the Cys130. Residues Lys165 and Ile191 each contribute to the FMN site. Residue 192 to 193 coordinates substrate; it reads NT. FMN is bound by residues Gly217, 243–244, and 265–266; these read GG and GT.

It belongs to the dihydroorotate dehydrogenase family. Type 1 subfamily. As to quaternary structure, heterotetramer of 2 PyrK and 2 PyrD type B subunits. Requires FMN as cofactor.

It is found in the cytoplasm. The catalysed reaction is (S)-dihydroorotate + NAD(+) = orotate + NADH + H(+). The protein operates within pyrimidine metabolism; UMP biosynthesis via de novo pathway; orotate from (S)-dihydroorotate (NAD(+) route): step 1/1. Its function is as follows. Catalyzes the conversion of dihydroorotate to orotate with NAD(+) as electron acceptor. This is Dihydroorotate dehydrogenase B (NAD(+)), catalytic subunit (pyrD) from Parabacteroides distasonis (strain ATCC 8503 / DSM 20701 / CIP 104284 / JCM 5825 / NCTC 11152).